The primary structure comprises 307 residues: MSTHTPPSSATPTSGQGVRPLTTADIRKAKGRQRLAMLTAYDYTSARIVDGAGADLILVGDSLGMVMLGREDTLSVTLDEMLHHCRAVVRGTRHAMVVADMPFMTYETGVRDALLNGARLFRESGVRAVKLEGAGPVLPQVRALVDAGIPVMGHLGLTPQRVAEMGGFKVQGRQAEAALRLFDDALALQEAGCFSLVLECVPAPVAEQVTARLHIPTIGIGAGAGCDGQVLVLHDMLGLYGELSPRFVKRYADLAGMAGEAVARYAHEVREGSFPAAEHTFGIDDGQFEAFMAALDKRGCRQTPTGE.

Mg(2+) contacts are provided by aspartate 61 and aspartate 100. Residues 61-62 (DS), aspartate 100, and lysine 130 each bind 3-methyl-2-oxobutanoate. Mg(2+) is bound at residue glutamate 132. The active-site Proton acceptor is glutamate 199.

This sequence belongs to the PanB family. In terms of assembly, homodecamer; pentamer of dimers. Mg(2+) serves as cofactor.

Its subcellular location is the cytoplasm. It carries out the reaction 3-methyl-2-oxobutanoate + (6R)-5,10-methylene-5,6,7,8-tetrahydrofolate + H2O = 2-dehydropantoate + (6S)-5,6,7,8-tetrahydrofolate. The protein operates within cofactor biosynthesis; (R)-pantothenate biosynthesis; (R)-pantoate from 3-methyl-2-oxobutanoate: step 1/2. Its function is as follows. Catalyzes the reversible reaction in which hydroxymethyl group from 5,10-methylenetetrahydrofolate is transferred onto alpha-ketoisovalerate to form ketopantoate. This Nitratidesulfovibrio vulgaris (strain ATCC 29579 / DSM 644 / CCUG 34227 / NCIMB 8303 / VKM B-1760 / Hildenborough) (Desulfovibrio vulgaris) protein is 3-methyl-2-oxobutanoate hydroxymethyltransferase.